We begin with the raw amino-acid sequence, 520 residues long: MSKFDLSALETFVRTIPQHYKGPGGAVAVLKDGKVVLRHAWGFADLSTRKAMTPETRMPICSVSKQFTCAVLLDSVGEPEVLDDALAAYLDKFAEKRPSVRDLCNNQSGLRDYWALTVLCGADPEGVFLPEQAQSLLRRLKTTHFAPGTHYSYCNGNFRILADLIEQHTGRSLIELLSERIFQPAGMKTAELIPDTALFDECTGYEGDTVRGFLPAVNRIHWMGDAGICASLDDMIAWEQFIDATRDDESGIYRRLSGLQTFSDGAAAPYGLGLKFEETGGKRLTGHGGALRGWRCQRWHCADERLSTIAMFNFEGGASDVAFKLMNIALGVPTSEQVRVAADAVWFGSWLDHETGLVLSLEDAGRGRMKARFGTGPEMMDVVGENEARSSMTAIRRDGDTIHLAREDENLSLTMQRLKGAAKQDIAGHYRSDELEADLLIVDEGGAFYGAFEGFLGKSDMYSLYEAGPDVWLLPVQRSMDAPSPGEWKLVFHRDAKGEITGMTVGCWLARHVDYRRIQE.

Residue Ser62 is the Nucleophile of the active site. The active-site Proton donor/acceptor is the Lys65. The important for specificity stretch occupies residues 477-487; sequence QRSMDAPSPGE. Asp481 is a substrate binding site.

It belongs to the peptidase S12 family. Homodimer.

It carries out the reaction Release of an N-terminal D-amino acid from a peptide, Xaa-|-Yaa-, in which Xaa is preferably D-Ala, D-Ser or D-Thr. D-amino acid amides and methyl esters also are hydrolyzed, as is glycine amide.. Its activity is regulated as follows. Inhibited by beta-lactam compounds such as 6-aminopenicillic acid, 7-aminocephalosporanic acid, benzylpenicillin and ampicillin. Inhibited by p-chloromercuribenzoate. Hydrolyzes N-terminal residues in D-amino acid-containing peptides. This is D-aminopeptidase from Brucella anthropi (strain ATCC 49188 / DSM 6882 / CCUG 24695 / JCM 21032 / LMG 3331 / NBRC 15819 / NCTC 12168 / Alc 37) (Ochrobactrum anthropi).